A 255-amino-acid polypeptide reads, in one-letter code: 5-oxoprolinase subunit A (255 aa).

Belongs to the LamB/PxpA family. Forms a complex composed of PxpA, PxpB and PxpC.

It catalyses the reaction 5-oxo-L-proline + ATP + 2 H2O = L-glutamate + ADP + phosphate + H(+). Functionally, catalyzes the cleavage of 5-oxoproline to form L-glutamate coupled to the hydrolysis of ATP to ADP and inorganic phosphate. The protein is 5-oxoprolinase subunit A of Pyrococcus horikoshii (strain ATCC 700860 / DSM 12428 / JCM 9974 / NBRC 100139 / OT-3).